The chain runs to 339 residues: UDP-N-acetylglucosamine--N-acetylmuramyl-(pentapeptide) pyrophosphoryl-undecaprenol N-acetylglucosamine transferase (339 aa).

UDP-N-acetyl-alpha-D-glucosamine-binding positions include 9–11, N119, R160, S188, and Q280; that span reads TGG.

Belongs to the glycosyltransferase 28 family. MurG subfamily.

Its subcellular location is the cell inner membrane. The enzyme catalyses di-trans,octa-cis-undecaprenyl diphospho-N-acetyl-alpha-D-muramoyl-L-alanyl-D-glutamyl-meso-2,6-diaminopimeloyl-D-alanyl-D-alanine + UDP-N-acetyl-alpha-D-glucosamine = di-trans,octa-cis-undecaprenyl diphospho-[N-acetyl-alpha-D-glucosaminyl-(1-&gt;4)]-N-acetyl-alpha-D-muramoyl-L-alanyl-D-glutamyl-meso-2,6-diaminopimeloyl-D-alanyl-D-alanine + UDP + H(+). It participates in cell wall biogenesis; peptidoglycan biosynthesis. Functionally, cell wall formation. Catalyzes the transfer of a GlcNAc subunit on undecaprenyl-pyrophosphoryl-MurNAc-pentapeptide (lipid intermediate I) to form undecaprenyl-pyrophosphoryl-MurNAc-(pentapeptide)GlcNAc (lipid intermediate II). This chain is UDP-N-acetylglucosamine--N-acetylmuramyl-(pentapeptide) pyrophosphoryl-undecaprenol N-acetylglucosamine transferase, found in Thermus thermophilus (strain ATCC BAA-163 / DSM 7039 / HB27).